We begin with the raw amino-acid sequence, 295 residues long: Acetylglutamate kinase (295 aa).

Substrate is bound by residues 66–67, Arg-88, and Asn-193; that span reads GG.

It belongs to the acetylglutamate kinase family. ArgB subfamily.

It is found in the cytoplasm. It carries out the reaction N-acetyl-L-glutamate + ATP = N-acetyl-L-glutamyl 5-phosphate + ADP. Its pathway is amino-acid biosynthesis; L-arginine biosynthesis; N(2)-acetyl-L-ornithine from L-glutamate: step 2/4. Its function is as follows. Catalyzes the ATP-dependent phosphorylation of N-acetyl-L-glutamate. The chain is Acetylglutamate kinase from Allorhizobium ampelinum (strain ATCC BAA-846 / DSM 112012 / S4) (Agrobacterium vitis (strain S4)).